Here is a 163-residue protein sequence, read N- to C-terminus: Nucleotide-binding protein Mmcs_0777 (163 aa).

This sequence belongs to the YajQ family.

Its function is as follows. Nucleotide-binding protein. In Mycobacterium sp. (strain MCS), this protein is Nucleotide-binding protein Mmcs_0777.